A 119-amino-acid polypeptide reads, in one-letter code: MNKQNARHRRGLKAKALIRKTGRSRLVVYRSGVHIYSQIVKSDQLGDKVLVASSTIDKELRSSLTGKSKVEQASLVGQLLGKRAKAAGITQVAFDRAGYKYHGRVKALAEGAREAGLDF.

This sequence belongs to the universal ribosomal protein uL18 family. Part of the 50S ribosomal subunit; part of the 5S rRNA/L5/L18/L25 subcomplex. Contacts the 5S and 23S rRNAs.

In terms of biological role, this is one of the proteins that bind and probably mediate the attachment of the 5S RNA into the large ribosomal subunit, where it forms part of the central protuberance. In Legionella pneumophila (strain Paris), this protein is Large ribosomal subunit protein uL18.